The sequence spans 329 residues: Putative glucose ABC transporter permease protein TsgC13 (329 aa).

Transmembrane regions (helical) follow at residues 3 to 23 (FAAG…LAGL), 32 to 52 (GVLN…GFVV), 60 to 80 (WLGF…HAFL), 89 to 109 (VISG…FGSG), 139 to 161 (AFFR…WFFL), 193 to 213 (LAVI…SLAF), and 216 to 236 (LWVP…VVFA).

The protein belongs to the binding-protein-dependent transport system permease family. The complex is composed of two ATP-binding proteins (TsgD13), two transmembrane proteins (TsgB13 and TsgC13) and a solute-binding protein (TsgA13).

Its subcellular location is the cell membrane. Functionally, part of an ABC transporter complex involved in glucose import (Potential). Responsible for the translocation of the substrate across the membrane. The protein is Putative glucose ABC transporter permease protein TsgC13 (tsgC13) of Haloferax volcanii (strain ATCC 29605 / DSM 3757 / JCM 8879 / NBRC 14742 / NCIMB 2012 / VKM B-1768 / DS2) (Halobacterium volcanii).